The sequence spans 253 residues: 5-oxoprolinase subunit A (253 aa).

Belongs to the LamB/PxpA family. As to quaternary structure, forms a complex composed of PxpA, PxpB and PxpC.

The enzyme catalyses 5-oxo-L-proline + ATP + 2 H2O = L-glutamate + ADP + phosphate + H(+). Functionally, catalyzes the cleavage of 5-oxoproline to form L-glutamate coupled to the hydrolysis of ATP to ADP and inorganic phosphate. The polypeptide is 5-oxoprolinase subunit A (Bacillus cereus (strain 03BB102)).